We begin with the raw amino-acid sequence, 401 residues long: Tumor necrosis factor receptor superfamily member 11B (401 aa).

The first 21 residues, 1 to 21 (MNNLLCCALVFLDISIKWTTQ), serve as a signal peptide directing secretion. TNFR-Cys repeat units lie at residues 24-62 (FPPKYLHYDEETSHQLLCDKCPPGTYLKQHCTAKWKTVC), 65-105 (CPDH…NRVC), 107-142 (CKEGRYLEIEFCLKHRSCPPGFGVVQAGTPERNTVC), and 145-185 (CPDG…DNIC). Cystine bridges form between Cys-41–Cys-54, Cys-44–Cys-62, Cys-65–Cys-80, Cys-83–Cys-97, Cys-87–Cys-105, Cys-107–Cys-118, Cys-124–Cys-142, and Cys-145–Cys-160. The N-linked (GlcNAc...) asparagine glycan is linked to Asn-98. N-linked (GlcNAc...) asparagine glycans are attached at residues Asn-152, Asn-165, and Asn-178. An intrachain disulfide couples Cys-166 to Cys-185. Death domains follow at residues 198 to 269 (DVTL…IVKK) and 270 to 365 (IIQD…TQSL). The N-linked (GlcNAc...) asparagine glycan is linked to Asn-289.

Homodimer. Interacts with TNFSF10 and TNFSF11. In terms of processing, N-glycosylated. Contains sialic acid residues. The N-terminus is blocked. Highly expressed in adult lung, heart, kidney, liver, spleen, thymus, prostate, ovary, small intestine, thyroid, lymph node, trachea, adrenal gland, testis, and bone marrow. Detected at very low levels in brain, placenta and skeletal muscle. Highly expressed in fetal kidney, liver and lung.

It localises to the secreted. In terms of biological role, acts as a decoy receptor for TNFSF11/RANKL and thereby neutralizes its function in osteoclastogenesis. Inhibits the activation of osteoclasts and promotes osteoclast apoptosis in vitro. Bone homeostasis seems to depend on the local ratio between TNFSF11 and TNFRSF11B. May also play a role in preventing arterial calcification. May act as decoy receptor for TNFSF10/TRAIL and protect against apoptosis. TNFSF10/TRAIL binding blocks the inhibition of osteoclastogenesis. In Homo sapiens (Human), this protein is Tumor necrosis factor receptor superfamily member 11B (TNFRSF11B).